We begin with the raw amino-acid sequence, 454 residues long: Zinc finger protein 474 (454 aa).

The disordered stretch occupies residues 48–85 (RGEKIKTNPRKNRPGTVILSKQSSRRIMSGSQPRPPVI). Polar residues predominate over residues 66–79 (LSKQSSRRIMSGSQ). The C2HC/C3H-type 1 zinc finger occupies 91-120 (GFRVCYICGREFGSQSLGIHEPQCLEKWRV). 4 residues coordinate Zn(2+): C95, C98, H110, and C114. The segment at 125 to 146 (LPKHLRRPEPSKPPPFSGSGSY) is disordered. 5 consecutive C2HC/C3H-type zinc fingers follow at residues 162 to 191 (QLLP…KVEG), 218 to 247 (RTVI…KWKV), 281 to 310 (QLVS…QPSG), 352 to 381 (PTIV…KWHN), and 425 to 454 (QLVP…KVAK). Positions 166, 169, 181, 185, 222, 225, 237, and 241 each coordinate Zn(2+). The interval 256-282 (FRQPLPQKPQPLLTGQPKHAGPRQGQL) is disordered. C285, C288, H300, C304, C356, C359, H371, C375, C429, C432, H444, and C448 together coordinate Zn(2+). Residues 299–345 (VHQRSCKAQPSGPKVQDLTLGSRGGLKESTNPKPQRNMAAPPVTDKP) are disordered.

Zn(2+) serves as cofactor.

The protein is Zinc finger protein 474 (ZNF474) of Bos taurus (Bovine).